A 201-amino-acid polypeptide reads, in one-letter code: Large ribosomal subunit protein bL25 (201 aa).

This sequence belongs to the bacterial ribosomal protein bL25 family. CTC subfamily. In terms of assembly, part of the 50S ribosomal subunit; part of the 5S rRNA/L5/L18/L25 subcomplex. Contacts the 5S rRNA. Binds to the 5S rRNA independently of L5 and L18.

Functionally, this is one of the proteins that binds to the 5S RNA in the ribosome where it forms part of the central protuberance. The chain is Large ribosomal subunit protein bL25 from Chlorobaculum parvum (strain DSM 263 / NCIMB 8327) (Chlorobium vibrioforme subsp. thiosulfatophilum).